Consider the following 355-residue polypeptide: Ribosomal RNA large subunit methyltransferase M (355 aa).

Residues serine 183, 216–219, aspartate 235, aspartate 255, and aspartate 271 contribute to the S-adenosyl-L-methionine site; that span reads SPGG. Lysine 300 acts as the Proton acceptor in catalysis.

Belongs to the class I-like SAM-binding methyltransferase superfamily. RNA methyltransferase RlmE family. RlmM subfamily. Monomer.

It is found in the cytoplasm. The enzyme catalyses cytidine(2498) in 23S rRNA + S-adenosyl-L-methionine = 2'-O-methylcytidine(2498) in 23S rRNA + S-adenosyl-L-homocysteine + H(+). Its function is as follows. Catalyzes the 2'-O-methylation at nucleotide C2498 in 23S rRNA. The chain is Ribosomal RNA large subunit methyltransferase M from Pseudomonas putida (strain W619).